The sequence spans 344 residues: MALDVKSRAKLYEKLDFLGEGQFATVYKARDKTTNTIVAIKKIKVGHRTEAKDGINRTALREIKLLQELSHPNIIGLLDAFGHKSNISLLCFMETDLEVIIKDTSLVLTPANIKAYILMSLQGLEYMHNHWILHRDLKPNNLLLDENGVLKLADFGLAKAFGSPNRVYTHQVVTRWYRAPELLFGARMYGVGVDMWAVGSILAELLLRVPFLAGDSDLDQLTGIFEALGTPTEETWPGMSNLPDYVSFKLFPGTPLEHIFSAAGDDLLELLKGLFTFNPCTRTTASQALKMRYFSIRPGPTPGPQLPRPNSSTEALKEKENLLIGIKRKRDSIEQGTLKKKLVF.

Residues 12-294 enclose the Protein kinase domain; sequence YEKLDFLGEG…ASQALKMRYF (283 aa). ATP contacts are provided by residues 18–26 and lysine 41; that span reads LGEGQFATV. Aspartate 136 functions as the Proton acceptor in the catalytic mechanism. The residue at position 163 (serine 163) is a Phosphoserine; by CDK1 and CDK2. Threonine 169 is subject to Phosphothreonine; by CDK2.

This sequence belongs to the protein kinase superfamily. CMGC Ser/Thr protein kinase family. CDC2/CDKX subfamily. Probably associates with cyclin-H (ccnh) and mat1 to form a multimeric active enzyme. Post-translationally, phosphorylation of Ser-163 during mitosis inactivates the enzyme. Phosphorylation of Thr-169 is required for activity. Phosphorylated at Ser-163 and Thr-169 by CDK2.

The protein resides in the nucleus. The enzyme catalyses L-seryl-[protein] + ATP = O-phospho-L-seryl-[protein] + ADP + H(+). It catalyses the reaction L-threonyl-[protein] + ATP = O-phospho-L-threonyl-[protein] + ADP + H(+). The catalysed reaction is [DNA-directed RNA polymerase] + ATP = phospho-[DNA-directed RNA polymerase] + ADP + H(+). Its activity is regulated as follows. Phosphorylation at Thr-169 is required for enzymatic activity. Its function is as follows. Serine/threonine kinase involved in cell cycle control and in RNA polymerase II-mediated RNA transcription. Cyclin-dependent kinases (CDKs) are activated by the binding to a cyclin and mediate the progression through the cell cycle. Each different complex controls a specific transition between 2 subsequent phases in the cell cycle. Required for both activation and complex formation of cdk1/cyclin-B during G2-M transition, and for activation of cdk2/cyclins during G1-S transition (but not complex formation). cdk7 is the catalytic subunit of the CDK-activating kinase (CAK) complex. CAK activates the cyclin-associated kinases cdk1, cdk2, cdk4 and cdk6 by threonine phosphorylation, thus regulating cell cycle progression. Initiates transcription by RNA polymerase II by mediating phosphorylation of polr2a at 'Ser-5' of the repetitive C-terminal domain (CTD) when polr2a is in complex with DNA, promoting dissociation from DNA and initiation. CAK complexed to the core-TFIIH basal transcription factor activates RNA polymerase II by serine phosphorylation of the CTD of polr2a, allowing its escape from the promoter and elongation of the transcripts. The polypeptide is Cyclin-dependent kinase 7 (cdk7) (Carassius auratus (Goldfish)).